Consider the following 646-residue polypeptide: MSPPQTTLPVTEAGLVPLLQPYGPYVLVRKLAEGGMAEIFLAKLLGADGFERNVVIKRMLPHLTNNPDFVEMFRDEARLAAKLAHPNIVQIQELGFAEGCYYICMEYLAGEDFSTTLRLAGRKRHYVPLPVVLRVLIDAARGLHFAHEFTNEAGQPLNVVHRDISPSNLYLTYQGQVKVLDFGIAKAESRLVNTRTGVVKGKYMYMAPEQARGKEVDRRADIFALGVSLYEALTHVRPFSRENDLAVLNALLQGELKPPRELRPDLPEELEAILLKAMAFKPEDRYPTAEAFADALETFLSEHLSGSGAMPLGAFLKGHFGEERFTERSRIPTLATLTATYGGAAAGAQGQAPGAEPHGTNLYGVLAREGDATSAQRPGMSMRPSSPGVPAHGAASRGSTSPESAPTAGGRRWRTLAVGLAGGLMLAAAGIVGYRQWMTTPASVSLVPATVPVVEAVAPEAAAAQVGAPMEAVAPVGAAAQAGSLTDAVANGAGGDVGETDSAQLSVDAAGVTETDEAGLAGAASDVEAEADEEGADAAPVRSKKASSQKRVTLGIDDVQRVVSRGRARITTCFERYKADLPSSQGEVQVQLTIVSSGKVRAGTRGPLASSGVGRCLEAQAERLRFPPHRDQEVTVVMPFSWRVTQ.

Residues 1 to 415 (MSPPQTTLPV…PTAGGRRWRT (415 aa)) are Periplasmic-facing. Positions 25–300 (YVLVRKLAEG…AFADALETFL (276 aa)) constitute a Protein kinase domain. Residues 31 to 39 (LAEGGMAEI) and K57 contribute to the ATP site. D163 serves as the catalytic Proton acceptor. Residues 373 to 410 (TSAQRPGMSMRPSSPGVPAHGAASRGSTSPESAPTAGG) form a disordered region. The chain crosses the membrane as a helical span at residues 416 to 433 (LAVGLAGGLMLAAAGIVG). Residues 434–646 (YRQWMTTPAS…VMPFSWRVTQ (213 aa)) lie on the Cytoplasmic side of the membrane. Positions 521 to 547 (AGAASDVEAEADEEGADAAPVRSKKAS) are disordered. Residues 527-536 (VEAEADEEGA) show a composition bias toward acidic residues.

The protein belongs to the protein kinase superfamily. Tyr protein kinase family. As to quaternary structure, interacts with MglA. Autophosphorylated.

It localises to the cell inner membrane. It catalyses the reaction L-tyrosyl-[protein] + ATP = O-phospho-L-tyrosyl-[protein] + ADP + H(+). Essential for growth. Interacts with MglA to control social gliding motility. In Myxococcus xanthus (strain DK1622), this protein is Tyrosine-protein kinase MasK (masK).